Consider the following 559-residue polypeptide: Subtelomeric hrmA-associated cluster protein AFUB_079030 (559 aa).

Disordered regions lie at residues 163–190 (AKHPYNGGKPPAGAPPGKKGDPEKTKPE), 298–351 (RESN…TGMA), 427–451 (SITSSSPEQTSHHRQAPLPMQHSAS), and 525–559 (FRTGFLSHPCDPSQQAPHSSGCGHPDSWTQNRPHV). The span at 169–179 (GGKPPAGAPPG) shows a compositional bias: low complexity. Basic and acidic residues-rich tracts occupy residues 180–189 (KKGDPEKTKP) and 300–325 (SNQKEKDGDSNVDPDQKHEQEDDNAR). Over residues 336–346 (NSTSPMSNSAE) the composition is skewed to polar residues.

Its function is as follows. Part of the subtelomeric hrmA-associated cluster (HAC) containing genes that alter the hyphal surface (such as reduced total chitin or increased beta-glucan exposure) and perturb inter-hyphal interactions within the developing biofilms, resulting in a loss of vertically aligned polarized growing filaments. Consequently, this hypoxia-typic morphotype (called H-MORPH) with altered biofilm architecture leads to increased hypoxia fitness, increased host inflammation, rapid disease progression, and mortality in a murine model of invasive aspergillosis. The sequence is that of Subtelomeric hrmA-associated cluster protein AFUB_079030 from Aspergillus fumigatus (strain CBS 144.89 / FGSC A1163 / CEA10) (Neosartorya fumigata).